The chain runs to 853 residues: MKAEQKHTPMMQQYLKLKAENPEILLFYRMGDFYELFYDDAKRASQLLDISLTKRGASAGEPIPMAGVPFHAVEGYLAKLVQLGESVAICEQIGDPATSKGPVERKVVRIVTPGTVTDEALLSERIDNLIAAIYQHNGKFGYATLDVTSGRFQLVEPETEEAMAAELQRTAPRELLFPEDFEAVHLMSNRNGNRRRPVWEFELDTAKQQLNQQFGTRDLVGFGVEHASLGLCAAGCLIQYVKDTQRTALPHIRSLTFDRQDHSVILDAATRRNLELTQNLSGGTDNTLAEVLDHCATPMGSRMLKRWLHQPMRCVDTLNNRLDAIGEIKDQSLFTDIQPIFKQIGDIERILARLALRSARPRDMARLRHAMQQLPELEAVTSSLAHPYLKKLAQFAAPMDEVCDLLERAIKENPPVVIREGGVIAEGYNAELDEWRKLADGATEYLEKLEADERERHGIDTLKVGYNAVHGFFIQVSRGQSHLVPPHYVRRQTLKNAERYIIPELKEHEDKVLNSKSKALAVEKKLWEELFDLLMPNLEKIQNLASAISQLDVLQNLAERADSLDYCRPTLNKEAGISIQAGRHPVVEQVTSEPFIANPIELSSNRKMLIITGPNMGGKSTYMRQTALIALMAHIGSYVPAESAHIGSLDRIFTRIGASDDLASGRSTFMVEMTETANILHNATKNSLVLMDEIGRGTSTYDGLSLAWASAEWLATQIGAMTLFATHYFELTELPNLLPNLANVHLDAVEHGDSIAFMHAVQEGAASKSYGLAVAGLAGVPKPVIKNARNKLSQLEQLGQGNDSARPSTVDVANQLSLIPEPSDVEQALSNIDPDDLTPRQALEELYRLKKML.

613 to 620 (GPNMGGKS) contacts ATP.

This sequence belongs to the DNA mismatch repair MutS family.

Functionally, this protein is involved in the repair of mismatches in DNA. It is possible that it carries out the mismatch recognition step. This protein has a weak ATPase activity. The protein is DNA mismatch repair protein MutS of Vibrio campbellii (strain ATCC BAA-1116).